The primary structure comprises 459 residues: Bifunctional protein GlmU (459 aa).

Residues 1–229 (MSNYAIILAA…FDESLGVNDR (229 aa)) form a pyrophosphorylase region. Residues 8–11 (LAAG), K22, Q72, and 77–78 (GT) contribute to the UDP-N-acetyl-alpha-D-glucosamine site. Mg(2+) is bound at residue D102. UDP-N-acetyl-alpha-D-glucosamine is bound by residues G139, E154, N169, and N227. Position 227 (N227) interacts with Mg(2+). A linker region spans residues 230–250 (VALATAEKVMRHRIARQHMVN). Residues 251 to 459 (GVTVVNPDSA…NKKPHHPSQK (209 aa)) are N-acetyltransferase. Residues R332 and K350 each contribute to the UDP-N-acetyl-alpha-D-glucosamine site. The active-site Proton acceptor is the H362. UDP-N-acetyl-alpha-D-glucosamine contacts are provided by Y365 and N376. Acetyl-CoA is bound by residues A379, 385–386 (NY), S404, A422, and R439.

This sequence in the N-terminal section; belongs to the N-acetylglucosamine-1-phosphate uridyltransferase family. In the C-terminal section; belongs to the transferase hexapeptide repeat family. As to quaternary structure, homotrimer. Requires Mg(2+) as cofactor.

The protein localises to the cytoplasm. It catalyses the reaction alpha-D-glucosamine 1-phosphate + acetyl-CoA = N-acetyl-alpha-D-glucosamine 1-phosphate + CoA + H(+). The enzyme catalyses N-acetyl-alpha-D-glucosamine 1-phosphate + UTP + H(+) = UDP-N-acetyl-alpha-D-glucosamine + diphosphate. It participates in nucleotide-sugar biosynthesis; UDP-N-acetyl-alpha-D-glucosamine biosynthesis; N-acetyl-alpha-D-glucosamine 1-phosphate from alpha-D-glucosamine 6-phosphate (route II): step 2/2. It functions in the pathway nucleotide-sugar biosynthesis; UDP-N-acetyl-alpha-D-glucosamine biosynthesis; UDP-N-acetyl-alpha-D-glucosamine from N-acetyl-alpha-D-glucosamine 1-phosphate: step 1/1. The protein operates within bacterial outer membrane biogenesis; LPS lipid A biosynthesis. In terms of biological role, catalyzes the last two sequential reactions in the de novo biosynthetic pathway for UDP-N-acetylglucosamine (UDP-GlcNAc). The C-terminal domain catalyzes the transfer of acetyl group from acetyl coenzyme A to glucosamine-1-phosphate (GlcN-1-P) to produce N-acetylglucosamine-1-phosphate (GlcNAc-1-P), which is converted into UDP-GlcNAc by the transfer of uridine 5-monophosphate (from uridine 5-triphosphate), a reaction catalyzed by the N-terminal domain. This Streptococcus agalactiae serotype V (strain ATCC BAA-611 / 2603 V/R) protein is Bifunctional protein GlmU.